The primary structure comprises 395 residues: Cuticlin-5 (395 aa).

The signal sequence occupies residues 1–18 (MNFILAVFAIILLQAVRG). Residues 19–358 (EIDNAIVGDP…ELCMTAIGTT (340 aa)) lie on the Extracellular side of the membrane. The 246-residue stretch at 46–291 (SCVGNFIIKV…DYCDVPSCPD (246 aa)) folds into the ZP domain. 2 N-linked (GlcNAc...) asparagine glycosylation sites follow: Asn90 and Asn307. Residues 359–379 (LLVFLNAFLFIISLVSIVHVC) traverse the membrane as a helical segment. Topologically, residues 380–395 (CFRTSPKLEKTKSTML) are cytoplasmic.

It localises to the cell membrane. Plays a role in alae formation in L1 and dauer stage larvae. The protein is Cuticlin-5 of Caenorhabditis elegans.